Reading from the N-terminus, the 95-residue chain is Nucleoid-associated protein MMOB0740 (95 aa).

It belongs to the YbaB/EbfC family. Homodimer.

Its subcellular location is the cytoplasm. It is found in the nucleoid. Functionally, binds to DNA and alters its conformation. May be involved in regulation of gene expression, nucleoid organization and DNA protection. This chain is Nucleoid-associated protein MMOB0740, found in Mycoplasma mobile (strain ATCC 43663 / 163K / NCTC 11711) (Mesomycoplasma mobile).